We begin with the raw amino-acid sequence, 320 residues long: Heterogeneous nuclear ribonucleoprotein A1 (320 aa).

N-acetylmethionine is present on M1. At S2 the chain carries N-acetylserine; in Heterogeneous nuclear ribonucleoprotein A1, N-terminally processed. Residue S2 is modified to Phosphoserine. K3 is modified (N6-acetyllysine; alternate). Residue K3 forms a Glycyl lysine isopeptide (Lys-Gly) (interchain with G-Cter in SUMO2); alternate linkage. Phosphoserine occurs at positions 4 and 6. Positions 4 to 94 (SESPKEPEQL…EPKRAVSRED (91 aa)) are globular A domain. Residue K8 forms a Glycyl lysine isopeptide (Lys-Gly) (interchain with G-Cter in SUMO2) linkage. RRM domains lie at 14 to 97 (RKLF…DSQR) and 105 to 184 (KKIF…LSKQ). S22 is modified (phosphoserine). K78 participates in a covalent cross-link: Glycyl lysine isopeptide (Lys-Gly) (interchain with G-Cter in SUMO2). Residues 95 to 185 (SQRPGAHLTV…EVRKALSKQE (91 aa)) form a globular B domain region. K113 participates in a covalent cross-link: Glycyl lysine isopeptide (Lys-Gly) (interchain with G-Cter in SUMO). Residues K179 and K183 each participate in a glycyl lysine isopeptide (Lys-Gly) (interchain with G-Cter in SUMO2) cross-link. Residues 182–216 (SKQEMASASSSQRGRSGSGNFGGGRGGGFGGNDNF) are disordered. Phosphoserine; by MKNK2 is present on S192. R194 bears the Asymmetric dimethylarginine; alternate mark. R194 bears the Dimethylated arginine; alternate mark. R194 bears the Omega-N-methylarginine; alternate mark. Residues 197 to 216 (SGSGNFGGGRGGGFGGNDNF) show a composition bias toward gly residues. Residue S199 is modified to Phosphoserine. Asymmetric dimethylarginine; alternate occurs at positions 206, 218, 225, and 232. Dimethylated arginine; alternate is present on R206. Omega-N-methylarginine; alternate occurs at positions 206, 218, 225, and 232. Residues 218–240 (RGGNFSGRGGFGGSRGGGGYGGS) are RNA-binding RGG-box. Dimethylated arginine; alternate is present on R225. The segment at 268 to 305 (NQSSNFGPMKGGNFGGRSLGPYGGGGQYFAKPRNQGGY) is nuclear targeting sequence. A compositionally biased stretch (gly residues) spans 277-294 (KGGNFGGRSLGPYGGGGQ). The disordered stretch occupies residues 277–320 (KGGNFGGRSLGPYGGGGQYFAKPRNQGGYGGSSSSSSYGSGRRF). R284 is subject to Omega-N-methylarginine. Phosphoserine is present on S285. K298 is modified (N6-acetyllysine; alternate). Residue K298 forms a Glycyl lysine isopeptide (Lys-Gly) (interchain with G-Cter in SUMO2); alternate linkage. Omega-N-methylarginine is present on R300. A compositionally biased stretch (low complexity) spans 308-320 (SSSSSSYGSGRRF). S309 is modified (phosphoserine). 3 positions are modified to phosphoserine; by MKNK2: S310, S311, and S312. Residues S313 and S316 each carry the phosphoserine modification. Omega-N-methylarginine is present on R318.

Identified in the spliceosome C complex. Identified in a IGF2BP1-dependent mRNP granule complex containing untranslated mRNAs. Interacts with SEPT6, C9orf72, KHDRBS1, UBQLN2. Interacts with PPIA/CYPA. Sumoylated.

It is found in the nucleus. It localises to the cytoplasm. Functionally, involved in the packaging of pre-mRNA into hnRNP particles, transport of poly(A) mRNA from the nucleus to the cytoplasm and modulation of splice site selection. Plays a role in the splicing of pyruvate kinase PKM by binding repressively to sequences flanking PKM exon 9, inhibiting exon 9 inclusion and resulting in exon 10 inclusion and production of the PKM M2 isoform. Binds to the IRES and thereby inhibits the translation of the apoptosis protease activating factor APAF1. May bind to specific miRNA hairpins. This is Heterogeneous nuclear ribonucleoprotein A1 (HNRNPA1) from Macaca mulatta (Rhesus macaque).